Consider the following 295-residue polypeptide: Alpha-soluble NSF attachment protein (295 aa).

N-acetylmethionine is present on Met-1. Ser-26, Ser-29, and Ser-195 each carry phosphoserine.

The protein belongs to the SNAP family. As to quaternary structure, interacts with PRKCABP, and disrupts the interaction between GRIA2 and PRKCABP, leading to the internalization of GRIA2. Found in a complex with VAMP8. Component of a SNARE-like complex that contains at least ZW10, USE1L, RINT1, STX18 and NAPA/SNAP-alpha. Interacts with VTI1A. Interacts with STX12. Interacts with GNA12 (via N-terminus); the interaction promotes CDH5 localization to plasma membrane.

The protein resides in the cell membrane. In terms of biological role, required for vesicular transport between the endoplasmic reticulum and the Golgi apparatus. Together with GNA12 promotes CDH5 localization to plasma membrane. The protein is Alpha-soluble NSF attachment protein (NAPA) of Homo sapiens (Human).